The sequence spans 212 residues: Amelotin (212 aa).

Residues 1–16 form the signal peptide; that stretch reads MKTVVLLLCLLGSAQS. Disordered stretches follow at residues 23–42 and 141–212; these read PALG…PLTQ and PSGQ…NRTK. 2 stretches are compositionally biased toward polar residues: residues 33–42 and 165–178; these read TPGQVTPLTQ and PANQ…TTPA.

This sequence belongs to the amelotin family. O-glycosylated. In terms of processing, phosphorylated by FAM20C in vitro. As to expression, highest expression in the mandible. Found in the basal lamina of maturation stage ameloblasts of incisors and unerupted molars. Also found in the internal basal lamina of junctional epithelium in molars.

The protein resides in the secreted. Is a promoter of calcium phosphate mineralization, playing a critical role in the formation of the compact, mineralized, aprismatic enamel surface layer during the maturation stage of amelogenesis. The sequence is that of Amelotin from Rattus norvegicus (Rat).